The chain runs to 447 residues: MNAWEVNFDGLVGLTHHYAGLSFGNKASTRHRFQVSNPRLAAKQGLLKMKTLADAGFPQAVIPPHERPFIPVLRQLGFSGSDEQVLEKVVRQAPHWLSSVSSASPMWVANAATIAPSADTLDGKVHLTVANLNNKFHRSLEAPVTESLLKAIFNDEEKFSVHSALPQVALLGDEGAANHNRLGGHYGEPGMQLFVYGREEGNDTRPSRYPARQTREASEAVARLNQVNPQQVIFAQQNPDVIDQGVFHNDVIAVSNRQVLFCHQQAFARQSQLLANLRARVNGFMAIEVPATQVSVSDAVSTYLFNSQLLSRDDGSMMLVLPQECREHAGVWGYLNELLAADNPISELKVFDLRESMANGGGPACLRLRVVLTQEERRAVNPAVMMNDTLFNALNDWVDRYYRDRLTAADLADPQLLREGREALDVLSQLLNLGSVYPFQREGGGNG.

Substrate-binding positions include 19–28 (AGLSFGNKAS), N110, and 137–138 (HR). E174 is a catalytic residue. R212 contacts substrate. The active site involves H248. Residues D250 and N359 each contribute to the substrate site. The Nucleophile role is filled by C365.

Belongs to the succinylarginine dihydrolase family. Homodimer.

The enzyme catalyses N(2)-succinyl-L-arginine + 2 H2O + 2 H(+) = N(2)-succinyl-L-ornithine + 2 NH4(+) + CO2. The protein operates within amino-acid degradation; L-arginine degradation via AST pathway; L-glutamate and succinate from L-arginine: step 2/5. Functionally, catalyzes the hydrolysis of N(2)-succinylarginine into N(2)-succinylornithine, ammonia and CO(2). The chain is N-succinylarginine dihydrolase from Escherichia coli O157:H7.